Consider the following 240-residue polypeptide: 1-(5-phosphoribosyl)-5-[(5-phosphoribosylamino)methylideneamino] imidazole-4-carboxamide isomerase (240 aa).

Asp8 serves as the catalytic Proton acceptor. Asp129 acts as the Proton donor in catalysis.

The protein belongs to the HisA/HisF family.

The protein localises to the cytoplasm. It carries out the reaction 1-(5-phospho-beta-D-ribosyl)-5-[(5-phospho-beta-D-ribosylamino)methylideneamino]imidazole-4-carboxamide = 5-[(5-phospho-1-deoxy-D-ribulos-1-ylimino)methylamino]-1-(5-phospho-beta-D-ribosyl)imidazole-4-carboxamide. It participates in amino-acid biosynthesis; L-histidine biosynthesis; L-histidine from 5-phospho-alpha-D-ribose 1-diphosphate: step 4/9. This is 1-(5-phosphoribosyl)-5-[(5-phosphoribosylamino)methylideneamino] imidazole-4-carboxamide isomerase from Listeria monocytogenes serotype 4b (strain CLIP80459).